The chain runs to 201 residues: Recombination protein RecR (201 aa).

The segment at 60 to 75 (CSRCGNVDTVDPCIVC) adopts a C4-type zinc-finger fold. Residues 83–178 (SVIIVVEDVS…KITRLAHGVP (96 aa)) form the Toprim domain.

It belongs to the RecR family.

Its function is as follows. May play a role in DNA repair. It seems to be involved in an RecBC-independent recombinational process of DNA repair. It may act with RecF and RecO. The chain is Recombination protein RecR from Rhizobium johnstonii (strain DSM 114642 / LMG 32736 / 3841) (Rhizobium leguminosarum bv. viciae).